The sequence spans 354 residues: Zinc finger protein 346 (354 aa).

Matrin-type zinc fingers lie at residues 34–64 (TQCKVCSAVLISESQKLAHYQSRKHANKVRR), 95–125 (KCCPICNMTFSSPVVAESHYSGKTHIKNLRL), 165–195 (KFCKLCHATFNNPLMAEQHYAGKKHKKQETK), and 232–262 (FSCDTCNIVLNSIEQYQAHVSGAKHKNQLMS). Zn(2+) contacts are provided by cysteine 36, cysteine 39, histidine 52, histidine 58, cysteine 97, cysteine 100, histidine 113, and histidine 119. Residues 263–343 (MTPLSKEGPP…QPYVREDMMG (81 aa)) form a disordered region. Composition is skewed to low complexity over residues 270–289 (GPPAAGGPSALAGPPSTGGA) and 310–323 (GPSSFGGLPPMGGL). Pro residues predominate over residues 324–333 (MPPPYPPPHS).

Its subcellular location is the nucleus. It localises to the cytoplasm. Functionally, binds preferentially to dsRNA, but also to RNA-DNA hybrids. The chain is Zinc finger protein 346 from Xenopus tropicalis (Western clawed frog).